Consider the following 507-residue polypeptide: Rhomboid protease GluP (507 aa).

5 helical membrane-spanning segments follow: residues Phe-179–Gly-199, Ile-229–Gly-249, Phe-261–Pro-281, Pro-283–Leu-303, and Thr-312–Ser-332. Catalysis depends on Ser-288, which acts as the Nucleophile. Catalysis depends on His-339, which acts as the Charge relay system. Transmembrane regions (helical) follow at residues Ile-340–Ala-360 and Leu-365–Ser-385. TPR repeat units lie at residues Ala-424–Asp-457 and His-458–Glu-491.

Belongs to the peptidase S54 family.

The protein resides in the cell membrane. It catalyses the reaction Cleaves type-1 transmembrane domains using a catalytic dyad composed of serine and histidine that are contributed by different transmembrane domains.. With respect to regulation, inhibited by dichloroisocoumarin (DCI) and N-p-tosyl-L-phenylalanine chloromethyl ketone (TPCK), but not by other serine protease inhibitors such as sulfonyl fluoride PMSF and 4-(2-aminoethyl)benzenesulfonyl fluoride (AEBSF). In terms of biological role, rhomboid-type serine protease that catalyzes intramembrane proteolysis. Important for normal cell division and sporulation. May act as a glucose exporter. This chain is Rhomboid protease GluP (gluP), found in Bacillus subtilis (strain 168).